Consider the following 39-residue polypeptide: Cytochrome b559 subunit beta (39 aa).

Residues 14 to 30 form a helical membrane-spanning segment; it reads WLAIHGLAVPTVFFLGS. His-18 contacts heme.

Belongs to the PsbE/PsbF family. Heterodimer of an alpha subunit and a beta subunit. PSII is composed of 1 copy each of membrane proteins PsbA, PsbB, PsbC, PsbD, PsbE, PsbF, PsbH, PsbI, PsbJ, PsbK, PsbL, PsbM, PsbT, PsbX, PsbY, PsbZ, Psb30/Ycf12, at least 3 peripheral proteins of the oxygen-evolving complex and a large number of cofactors. It forms dimeric complexes. The cofactor is heme b.

The protein localises to the plastid. The protein resides in the chloroplast thylakoid membrane. In terms of biological role, this b-type cytochrome is tightly associated with the reaction center of photosystem II (PSII). PSII is a light-driven water:plastoquinone oxidoreductase that uses light energy to abstract electrons from H(2)O, generating O(2) and a proton gradient subsequently used for ATP formation. It consists of a core antenna complex that captures photons, and an electron transfer chain that converts photonic excitation into a charge separation. This Staurastrum punctulatum (Green alga) protein is Cytochrome b559 subunit beta.